The primary structure comprises 99 residues: Putative septation protein SpoVG (99 aa).

The protein belongs to the SpoVG family.

In terms of biological role, could be involved in septation. The chain is Putative septation protein SpoVG from Exiguobacterium sp. (strain ATCC BAA-1283 / AT1b).